Consider the following 434-residue polypeptide: UDP-N-acetylglucosamine 1-carboxyvinyltransferase (434 aa).

Residue 22-23 (KN) coordinates phosphoenolpyruvate. Position 97 (Arg-97) interacts with UDP-N-acetyl-alpha-D-glucosamine. The Proton donor role is filled by Asp-121. The UDP-N-acetyl-alpha-D-glucosamine site is built by Asp-319 and Met-341.

It belongs to the EPSP synthase family. MurA subfamily.

Its subcellular location is the cytoplasm. The catalysed reaction is phosphoenolpyruvate + UDP-N-acetyl-alpha-D-glucosamine = UDP-N-acetyl-3-O-(1-carboxyvinyl)-alpha-D-glucosamine + phosphate. It participates in cell wall biogenesis; peptidoglycan biosynthesis. In terms of biological role, cell wall formation. Adds enolpyruvyl to UDP-N-acetylglucosamine. The chain is UDP-N-acetylglucosamine 1-carboxyvinyltransferase from Porphyromonas gingivalis (strain ATCC BAA-308 / W83).